Here is a 221-residue protein sequence, read N- to C-terminus: Stromal cell-derived factor 2-like protein 1 (221 aa).

Residues 1–28 (MWSAGRGGAAWPVLLGLLLALLVPGGGA) form the signal peptide. MIR domains lie at 33–87 (AELV…IRGG), 95–150 (GSPV…VRCS), and 151–205 (GQHW…AMEG). Ser215 is subject to Phosphoserine. A Prevents secretion from ER motif is present at residues 218–221 (HDEL).

As to quaternary structure, part of a large chaperone multiprotein complex comprising CABP1, DNAJB11, HSP90B1, HSPA5, HYOU, PDIA2, PDIA4, PPIB, SDF2L1, UGGT1 and very small amounts of ERP29, but not, or at very low levels, CALR nor CANX. In terms of tissue distribution, ubiquitously expressed with high expression in testis, moderate expression in the pancreas, spleen, prostate, small intestine and colon. Very low expression is seen in brain and skeletal muscle.

The protein resides in the endoplasmic reticulum lumen. The polypeptide is Stromal cell-derived factor 2-like protein 1 (SDF2L1) (Homo sapiens (Human)).